Consider the following 493-residue polypeptide: tRNA(Ile)-lysidine synthase, chloroplastic (493 aa).

68–73 (SGGQDS) provides a ligand contact to ATP.

It belongs to the tRNA(Ile)-lysidine synthase family.

It localises to the plastid. Its subcellular location is the chloroplast. The enzyme catalyses cytidine(34) in tRNA(Ile2) + L-lysine + ATP = lysidine(34) in tRNA(Ile2) + AMP + diphosphate + H(+). Its function is as follows. Ligates lysine onto the cytidine present at position 34 of the AUA codon-specific tRNA(Ile) that contains the anticodon CAU, in an ATP-dependent manner. Cytidine is converted to lysidine, thus changing the amino acid specificity of the tRNA from methionine to isoleucine. In Staurastrum punctulatum (Green alga), this protein is tRNA(Ile)-lysidine synthase, chloroplastic.